The chain runs to 627 residues: uncharacterized protein (627 aa).

Disordered stretches follow at residues 57–82, 96–121, 160–184, 198–232, 247–277, 335–358, and 449–579; these read EDAM…QGED, PEAQ…APPG, GCSH…DAAY, AQSQ…CPSG, SHDA…RGAP, RQAG…EAAY, and VFDV…PPLS. The span at 169 to 183 shows a compositional bias: low complexity; sequence SSSDQAADAPAGDAA. The segment covering 336–357 has biased composition (low complexity); the sequence is QAGAEPAQAPATAPAPEGTEAA. Basic and acidic residues predominate over residues 450–464; it reads FDVKEQGAHADRDAA.

This is an uncharacterized protein from Treponema pallidum (strain Nichols).